The sequence spans 347 residues: NADH-ubiquinone oxidoreductase chain 2 (347 aa).

Transmembrane regions (helical) follow at residues Pro3 to Ser23, His25 to Met45, Phe60 to Phe80, Gly96 to Pro116, Ile122 to Leu142, Leu153 to Thr173, Ile178 to Pro198, Leu200 to Met220, Leu237 to Leu257, Asp274 to Met294, and Ile323 to Met343.

It belongs to the complex I subunit 2 family. As to quaternary structure, core subunit of respiratory chain NADH dehydrogenase (Complex I) which is composed of 45 different subunits. Interacts with TMEM242.

It localises to the mitochondrion inner membrane. The catalysed reaction is a ubiquinone + NADH + 5 H(+)(in) = a ubiquinol + NAD(+) + 4 H(+)(out). Its function is as follows. Core subunit of the mitochondrial membrane respiratory chain NADH dehydrogenase (Complex I) which catalyzes electron transfer from NADH through the respiratory chain, using ubiquinone as an electron acceptor. Essential for the catalytic activity and assembly of complex I. This is NADH-ubiquinone oxidoreductase chain 2 from Phoca vitulina (Harbor seal).